A 372-amino-acid chain; its full sequence is Putative glutamate--cysteine ligase 2 (372 aa).

The protein belongs to the glutamate--cysteine ligase type 2 family. YbdK subfamily.

The enzyme catalyses L-cysteine + L-glutamate + ATP = gamma-L-glutamyl-L-cysteine + ADP + phosphate + H(+). In terms of biological role, ATP-dependent carboxylate-amine ligase which exhibits weak glutamate--cysteine ligase activity. This is Putative glutamate--cysteine ligase 2 from Cupriavidus metallidurans (strain ATCC 43123 / DSM 2839 / NBRC 102507 / CH34) (Ralstonia metallidurans).